A 273-amino-acid polypeptide reads, in one-letter code: Putative inactive beta-glucuronidase protein GUSBP11 (273 aa).

The tract at residues 1 to 20 (MTAAETGRGKPRLGGGSGLG) is disordered.

It belongs to the glycosyl hydrolase 2 family.

In Homo sapiens (Human), this protein is Putative inactive beta-glucuronidase protein GUSBP11 (GUSBP11).